The primary structure comprises 87 residues: Chromosomal protein MC1b (87 aa).

In terms of biological role, protects DNA against thermal denaturation and modulates transcription. The protein is Chromosomal protein MC1b of Methanothrix soehngenii (Methanosaeta concilii).